The chain runs to 437 residues: Trigger factor (437 aa).

The 86-residue stretch at 161–246 (DDQVNIDFVG…VNSVSAPVLP (86 aa)) folds into the PPIase FKBP-type domain.

This sequence belongs to the FKBP-type PPIase family. Tig subfamily.

It is found in the cytoplasm. The catalysed reaction is [protein]-peptidylproline (omega=180) = [protein]-peptidylproline (omega=0). Involved in protein export. Acts as a chaperone by maintaining the newly synthesized protein in an open conformation. Functions as a peptidyl-prolyl cis-trans isomerase. This Pseudomonas putida (strain ATCC 47054 / DSM 6125 / CFBP 8728 / NCIMB 11950 / KT2440) protein is Trigger factor.